The chain runs to 323 residues: L-lactate dehydrogenase (323 aa).

Residues Val16, Asn37, and 81-82 (GA) contribute to the NAD(+) site. Substrate is bound by residues Gln84, Arg90, and 122 to 125 (NPVD). Residues 120-122 (ATN) and Ser145 contribute to the NAD(+) site. Position 150-153 (150-153 (DSAR)) interacts with substrate. The active-site Proton acceptor is the His177. Tyr221 carries the phosphotyrosine modification. A substrate-binding site is contributed by Thr230.

Belongs to the LDH/MDH superfamily. LDH family. Homotetramer.

The protein resides in the cytoplasm. It catalyses the reaction (S)-lactate + NAD(+) = pyruvate + NADH + H(+). The protein operates within fermentation; pyruvate fermentation to lactate; (S)-lactate from pyruvate: step 1/1. Functionally, catalyzes the conversion of lactate to pyruvate. The chain is L-lactate dehydrogenase from Limosilactobacillus reuteri (Lactobacillus reuteri).